The primary structure comprises 182 residues: Ferritin heavy chain (182 aa).

At Met1 the chain carries N-acetylmethionine. The residue at position 2 (Thr2) is an N-acetylthreonine; in Ferritin heavy chain, N-terminally processed. The 150-residue stretch at 11 to 160 folds into the Ferritin-like diiron domain; the sequence is QNYHQDSEAA…DHVTNLRRMG (150 aa). Fe cation is bound by residues Glu28, Glu63, His66, Glu108, and Gln142.

Belongs to the ferritin family. In terms of assembly, oligomer of 24 subunits. There are two types of subunits: L (light) chain and H (heavy) chain. The major chain can be light or heavy, depending on the species and tissue type. The functional molecule forms a roughly spherical shell with a diameter of 12 nm and contains a central cavity into which the insoluble mineral iron core is deposited. Interacts with NCOA4; NCOA4 promotes targeting of the iron-binding ferritin complex to autolysosomes following starvation or iron depletion.

Its subcellular location is the cytoplasm. It is found in the lysosome. The protein localises to the cytoplasmic vesicle. It localises to the autophagosome. The catalysed reaction is 4 Fe(2+) + O2 + 4 H(+) = 4 Fe(3+) + 2 H2O. Functionally, stores iron in a soluble, non-toxic, readily available form. Important for iron homeostasis. Has ferroxidase activity. Iron is taken up in the ferrous form and deposited as ferric hydroxides after oxidation. Also plays a role in delivery of iron to cells. Mediates iron uptake in capsule cells of the developing kidney. Delivery to lysosomes is mediated by the cargo receptor NCOA4 for autophagic degradation and release of iron. This is Ferritin heavy chain (FTH1) from Equus caballus (Horse).